The following is a 416-amino-acid chain: Adipocyte plasma membrane-associated protein (416 aa).

The Cytoplasmic segment spans residues 1–39; that stretch reads MNEPEGLRFRRLNRPQIITDELQEPQYKGTSTYSGKVFR. A helical transmembrane segment spans residues 40 to 60; that stretch reads VILVTLGGCLILPLLVVFFLL. Residues 61 to 412 lie on the Extracellular side of the membrane; the sequence is ESPIHPELLS…FRSPYLCKLD (352 aa). Asn-160 carries an N-linked (GlcNAc...) asparagine glycan.

This sequence belongs to the strictosidine synthase family.

The protein localises to the membrane. The polypeptide is Adipocyte plasma membrane-associated protein (apmap) (Salmo salar (Atlantic salmon)).